Here is a 561-residue protein sequence, read N- to C-terminus: Zinc finger protein 37A (561 aa).

Residues 8-79 (VSFRDVTVGF…EEKFPSQSHL (72 aa)) form the KRAB domain. The C2H2-type 1; degenerate zinc-finger motif lies at 146–168 (FEYNECGKAFPENSLFLVHKRGY). Residues 243 to 265 (IEYNECGTFFSEKLVLHLQQRTH) form a C2H2-type 2; degenerate zinc finger. 10 consecutive C2H2-type zinc fingers follow at residues 271 to 293 (YECH…QRTH), 299 to 321 (YECH…QRIH), 327 to 349 (YGCH…QRTH), 355 to 377 (YECH…QKTH), 383 to 405 (YECY…QRIH), 411 to 433 (YECN…LRTH), 439 to 461 (YECI…LRRH), 467 to 489 (FGCN…QRTH), 495 to 517 (YGCN…HRTH), and 523 to 545 (YECN…QRIH).

This sequence belongs to the krueppel C2H2-type zinc-finger protein family.

It is found in the nucleus. Functionally, may be involved in transcriptional regulation. This Homo sapiens (Human) protein is Zinc finger protein 37A (ZNF37A).